We begin with the raw amino-acid sequence, 370 residues long: Chaperone protein DnaJ (370 aa).

The J domain occupies 5-70 (DYYEVLGVSK…EKRSMYDRMG (66 aa)). The CR-type zinc-finger motif lies at 134 to 212 (GVKKTITFTA…CHGSGVADRQ (79 aa)). Residues Cys-147, Cys-150, Cys-164, Cys-167, Cys-186, Cys-189, Cys-200, and Cys-203 each coordinate Zn(2+). CXXCXGXG motif repeat units lie at residues 147-154 (CDVCDGKG), 164-171 (CKTCHGSG), 186-193 (CGTCRGQG), and 200-207 (CHACHGSG). Positions 351-370 (DGEDSASSPKKKSFFDRLFD) are disordered.

Belongs to the DnaJ family. In terms of assembly, homodimer. It depends on Zn(2+) as a cofactor.

The protein resides in the cytoplasm. In terms of biological role, participates actively in the response to hyperosmotic and heat shock by preventing the aggregation of stress-denatured proteins and by disaggregating proteins, also in an autonomous, DnaK-independent fashion. Unfolded proteins bind initially to DnaJ; upon interaction with the DnaJ-bound protein, DnaK hydrolyzes its bound ATP, resulting in the formation of a stable complex. GrpE releases ADP from DnaK; ATP binding to DnaK triggers the release of the substrate protein, thus completing the reaction cycle. Several rounds of ATP-dependent interactions between DnaJ, DnaK and GrpE are required for fully efficient folding. Also involved, together with DnaK and GrpE, in the DNA replication of plasmids through activation of initiation proteins. In Acinetobacter baumannii (strain AB0057), this protein is Chaperone protein DnaJ.